The following is a 235-amino-acid chain: Putative uridine kinase C227.14 (235 aa).

36–43 (GGPGSGKS) lines the ATP pocket.

Belongs to the uridine kinase family.

The protein localises to the cytoplasm. Its subcellular location is the nucleus. The enzyme catalyses uridine + ATP = UMP + ADP + H(+). It carries out the reaction cytidine + ATP = CMP + ADP + H(+). Its pathway is pyrimidine metabolism; CTP biosynthesis via salvage pathway; CTP from cytidine: step 1/3. It participates in pyrimidine metabolism; UMP biosynthesis via salvage pathway; UMP from uridine: step 1/1. The protein is Putative uridine kinase C227.14 of Schizosaccharomyces pombe (strain 972 / ATCC 24843) (Fission yeast).